Consider the following 466-residue polypeptide: 3-isopropylmalate dehydratase large subunit (466 aa).

Cys347, Cys407, and Cys410 together coordinate [4Fe-4S] cluster.

The protein belongs to the aconitase/IPM isomerase family. LeuC type 1 subfamily. Heterodimer of LeuC and LeuD. [4Fe-4S] cluster serves as cofactor.

The enzyme catalyses (2R,3S)-3-isopropylmalate = (2S)-2-isopropylmalate. It participates in amino-acid biosynthesis; L-leucine biosynthesis; L-leucine from 3-methyl-2-oxobutanoate: step 2/4. Catalyzes the isomerization between 2-isopropylmalate and 3-isopropylmalate, via the formation of 2-isopropylmaleate. This Escherichia coli O139:H28 (strain E24377A / ETEC) protein is 3-isopropylmalate dehydratase large subunit.